Here is a 416-residue protein sequence, read N- to C-terminus: Tyrosine--tRNA ligase (416 aa).

An L-tyrosine-binding site is contributed by Tyr40. The short motif at 45 to 54 is the 'HIGH' region element; it reads ATAASLHVGH. Residues Tyr177 and Gln181 each coordinate L-tyrosine. Residues 237 to 241 carry the 'KMSKS' region motif; sequence KMGKS. Lys240 lines the ATP pocket. One can recognise an S4 RNA-binding domain in the interval 351-416; the sequence is LSVAHFLVAA…RKKHKLVRLS (66 aa).

This sequence belongs to the class-I aminoacyl-tRNA synthetase family. TyrS type 1 subfamily. As to quaternary structure, homodimer.

It is found in the cytoplasm. The enzyme catalyses tRNA(Tyr) + L-tyrosine + ATP = L-tyrosyl-tRNA(Tyr) + AMP + diphosphate + H(+). Its function is as follows. Catalyzes the attachment of tyrosine to tRNA(Tyr) in a two-step reaction: tyrosine is first activated by ATP to form Tyr-AMP and then transferred to the acceptor end of tRNA(Tyr). The polypeptide is Tyrosine--tRNA ligase (Cereibacter sphaeroides (strain KD131 / KCTC 12085) (Rhodobacter sphaeroides)).